A 122-amino-acid polypeptide reads, in one-letter code: Large ribosomal subunit protein uL14 (122 aa).

This sequence belongs to the universal ribosomal protein uL14 family. As to quaternary structure, part of the 50S ribosomal subunit. Forms a cluster with proteins L3 and L19. In the 70S ribosome, L14 and L19 interact and together make contacts with the 16S rRNA in bridges B5 and B8.

Its function is as follows. Binds to 23S rRNA. Forms part of two intersubunit bridges in the 70S ribosome. The protein is Large ribosomal subunit protein uL14 of Renibacterium salmoninarum (strain ATCC 33209 / DSM 20767 / JCM 11484 / NBRC 15589 / NCIMB 2235).